Here is a 409-residue protein sequence, read N- to C-terminus: Lissencephaly-1 homolog (409 aa).

A LisH domain is found at 7-39 (QREELNQAIADYLGTNGYADSLEAFRKEADLST). A coiled-coil region spans residues 54 to 81 (TSVIRLQKKVMELEAKLTEAEKEVIEGA). WD repeat units follow at residues 104–145 (GHRA…RSLK), 146–185 (GHTDSVQDVAFDAQGKLLVSCSADLSIKLWDFQQSYACVK), 189–228 (GHDHNVSSVAFVPAGDYVLSASRDRTIKMWEVATGYCVKT), 231–270 (GHREWVRMVRVHIEGSLFATCSNDHTIRVWLTNSKDCKVE), 273–332 (DHEH…CLLT), 335–374 (GHDNWVRGLAFHPGGKYLVSASDDKTIRVWDLRNKRCMKT), and 377–409 (AHQHFCTSIDFHKAHPYVISGSVDQTVKVWECR).

The protein belongs to the WD repeat LIS1/nudF family.

It is found in the cytoplasm. Its subcellular location is the cytoskeleton. It localises to the microtubule organizing center. The protein resides in the centrosome. Functionally, positively regulates the activity of the minus-end directed microtubule motor protein dynein. May enhance dynein-mediated microtubule sliding by targeting dynein to the microtubule plus end. Required for several dynein- and microtubule-dependent processes. The polypeptide is Lissencephaly-1 homolog (Drosophila willistoni (Fruit fly)).